The primary structure comprises 124 residues: UPF0102 protein Haur_0145 (124 aa).

It belongs to the UPF0102 family.

The protein is UPF0102 protein Haur_0145 of Herpetosiphon aurantiacus (strain ATCC 23779 / DSM 785 / 114-95).